Consider the following 226-residue polypeptide: Urease accessory protein UreF (226 aa).

This sequence belongs to the UreF family. UreD, UreF and UreG form a complex that acts as a GTP-hydrolysis-dependent molecular chaperone, activating the urease apoprotein by helping to assemble the nickel containing metallocenter of UreC. The UreE protein probably delivers the nickel.

The protein resides in the cytoplasm. In terms of biological role, required for maturation of urease via the functional incorporation of the urease nickel metallocenter. This Burkholderia ambifaria (strain ATCC BAA-244 / DSM 16087 / CCUG 44356 / LMG 19182 / AMMD) (Burkholderia cepacia (strain AMMD)) protein is Urease accessory protein UreF.